The following is a 245-amino-acid chain: Enolase-phosphatase E1 (245 aa).

This sequence belongs to the HAD-like hydrolase superfamily. MasA/MtnC family. As to quaternary structure, monomer. It depends on Mg(2+) as a cofactor.

It catalyses the reaction 5-methylsulfanyl-2,3-dioxopentyl phosphate + H2O = 1,2-dihydroxy-5-(methylsulfanyl)pent-1-en-3-one + phosphate. It functions in the pathway amino-acid biosynthesis; L-methionine biosynthesis via salvage pathway; L-methionine from S-methyl-5-thio-alpha-D-ribose 1-phosphate: step 3/6. The protein operates within amino-acid biosynthesis; L-methionine biosynthesis via salvage pathway; L-methionine from S-methyl-5-thio-alpha-D-ribose 1-phosphate: step 4/6. Its function is as follows. Bifunctional enzyme that catalyzes the enolization of 2,3-diketo-5-methylthiopentyl-1-phosphate (DK-MTP-1-P) into the intermediate 2-hydroxy-3-keto-5-methylthiopentenyl-1-phosphate (HK-MTPenyl-1-P), which is then dephosphorylated to form the acireductone 1,2-dihydroxy-3-keto-5-methylthiopentene (DHK-MTPene). The polypeptide is Enolase-phosphatase E1 (Synechococcus sp. (strain CC9902)).